Reading from the N-terminus, the 349-residue chain is Galactose-1-phosphate uridylyltransferase (349 aa).

Position 29 to 32 (29 to 32 (RAKR)) interacts with UDP-alpha-D-glucose. C53 and C56 together coordinate Zn(2+). A UDP-alpha-D-glucose-binding site is contributed by 78 to 79 (ND). Position 116 (H116) interacts with Zn(2+). Residues N154 and 160-162 (GCS) each bind UDP-alpha-D-glucose. H165 is a binding site for Zn(2+). H167 functions as the Tele-UMP-histidine intermediate in the catalytic mechanism. Q169 contributes to the UDP-alpha-D-glucose binding site. Fe cation is bound by residues E183, H282, H297, and H299. UDP-alpha-D-glucose-binding positions include 312–313 (KF), 317–318 (YE), and Q324.

It belongs to the galactose-1-phosphate uridylyltransferase type 1 family. Zn(2+) is required as a cofactor.

It catalyses the reaction alpha-D-galactose 1-phosphate + UDP-alpha-D-glucose = alpha-D-glucose 1-phosphate + UDP-alpha-D-galactose. It functions in the pathway carbohydrate metabolism; galactose metabolism. In Haemophilus influenzae (strain ATCC 51907 / DSM 11121 / KW20 / Rd), this protein is Galactose-1-phosphate uridylyltransferase (galT).